The primary structure comprises 88 residues: Cell division topological specificity factor (88 aa).

The protein belongs to the MinE family.

Functionally, prevents the cell division inhibition by proteins MinC and MinD at internal division sites while permitting inhibition at polar sites. This ensures cell division at the proper site by restricting the formation of a division septum at the midpoint of the long axis of the cell. The protein is Cell division topological specificity factor of Clostridium botulinum (strain Alaska E43 / Type E3).